The chain runs to 229 residues: Uracil-DNA glycosylase (229 aa).

The active-site Proton acceptor is the Asp-64.

The protein belongs to the uracil-DNA glycosylase (UDG) superfamily. UNG family.

Its subcellular location is the cytoplasm. It catalyses the reaction Hydrolyzes single-stranded DNA or mismatched double-stranded DNA and polynucleotides, releasing free uracil.. Its function is as follows. Excises uracil residues from the DNA which can arise as a result of misincorporation of dUMP residues by DNA polymerase or due to deamination of cytosine. The chain is Uracil-DNA glycosylase from Geobacillus thermodenitrificans (strain NG80-2).